A 609-amino-acid chain; its full sequence is Kelch-like protein 20 (609 aa).

Residues 68-135 enclose the BTB domain; that stretch reads CDVVLVVGAK…AYTSQITVEE (68 aa). One can recognise a BACK domain in the interval 170–272; that stretch reads CLGIRAFADT…SPKFLVGTVG (103 aa). Kelch repeat units follow at residues 319-365, 367-413, 414-460, 462-507, 509-554, and 556-601; these read VLFA…VLDD, LYAV…VLGG, FLYA…VLGG, LYAV…VYQD, IYAV…VVNG, and LMAV…VIKM.

In terms of assembly, component of the BCR(KLHL20) E3 ubiquitin ligase complex, at least composed of CUL3, KLHL20 and RBX1. Interacts with PDZ-RhoGEF/ARHGEF11, DAPK1, PML and CORO7. Interacts with F-actin. Interacts with IFN-gamma (IFNG). Interacts (via kelch repeats) with IVNS1ABP (via kelch repeats); this interaction blocks the assembly of CUL3-KLHL20 complex.

Its subcellular location is the cytoplasm. The protein resides in the perinuclear region. It is found in the nucleus. The protein localises to the golgi apparatus. It localises to the trans-Golgi network. Its subcellular location is the cell projection. The protein resides in the axon. It is found in the dendrite. It participates in protein modification; protein ubiquitination. Substrate-specific adapter of a BCR (BTB-CUL3-RBX1) E3 ubiquitin-protein ligase complex involved in interferon response and anterograde Golgi to endosome transport. The BCR(KLHL20) E3 ubiquitin ligase complex mediates the ubiquitination of DAPK1, leading to its degradation by the proteasome, thereby acting as a negative regulator of apoptosis. The BCR(KLHL20) E3 ubiquitin ligase complex also specifically mediates 'Lys-33'-linked ubiquitination. Involved in anterograde Golgi to endosome transport by mediating 'Lys-33'-linked ubiquitination of CORO7, promoting interaction between CORO7 and EPS15, thereby facilitating actin polymerization and post-Golgi trafficking. Also acts as a regulator of endothelial migration during angiogenesis by controlling the activation of Rho GTPases. The BCR(KLHL20) E3 ubiquitin ligase complex acts as a regulator of neurite outgrowth by mediating ubiquitination and degradation of PDZ-RhoGEF/ARHGEF11. The polypeptide is Kelch-like protein 20 (KLHL20) (Pongo abelii (Sumatran orangutan)).